The primary structure comprises 126 residues: Glycine cleavage system H protein (126 aa).

The Lipoyl-binding domain occupies 22 to 104 (TVTIGITEYA…YEKAWMVKVE (83 aa)). Residue Lys-63 is modified to N6-lipoyllysine.

It belongs to the GcvH family. The glycine cleavage system is composed of four proteins: P, T, L and H. (R)-lipoate serves as cofactor.

In terms of biological role, the glycine cleavage system catalyzes the degradation of glycine. The H protein shuttles the methylamine group of glycine from the P protein to the T protein. Its function is as follows. Is also involved in protein lipoylation via its role as an octanoyl/lipoyl carrier protein intermediate. This Staphylococcus haemolyticus (strain JCSC1435) protein is Glycine cleavage system H protein.